A 327-amino-acid polypeptide reads, in one-letter code: Ribose-phosphate pyrophosphokinase (327 aa).

ATP is bound by residues 40-42 and 99-100; these read DGE and RQ. Positions 134 and 173 each coordinate Mg(2+). Lysine 196 is a catalytic residue. D-ribose 5-phosphate contacts are provided by residues arginine 198, aspartate 222, and 226-230; that span reads DTANT.

The protein belongs to the ribose-phosphate pyrophosphokinase family. Class I subfamily. Homohexamer. The cofactor is Mg(2+).

The protein resides in the cytoplasm. It catalyses the reaction D-ribose 5-phosphate + ATP = 5-phospho-alpha-D-ribose 1-diphosphate + AMP + H(+). The protein operates within metabolic intermediate biosynthesis; 5-phospho-alpha-D-ribose 1-diphosphate biosynthesis; 5-phospho-alpha-D-ribose 1-diphosphate from D-ribose 5-phosphate (route I): step 1/1. Its function is as follows. Involved in the biosynthesis of the central metabolite phospho-alpha-D-ribosyl-1-pyrophosphate (PRPP) via the transfer of pyrophosphoryl group from ATP to 1-hydroxyl of ribose-5-phosphate (Rib-5-P). The sequence is that of Ribose-phosphate pyrophosphokinase from Neisseria meningitidis serogroup A / serotype 4A (strain DSM 15465 / Z2491).